Consider the following 179-residue polypeptide: MAKLHDYYRDTVVNELKAKFNYSSVMQVPRIEKITLNMGVGEALTDKKLLDNAVADLTAISGQKPLITKARKSVAGFKIRQGYPIGCKVTLRGERMWEFFERLITIAVPRIRDFRGLNAKSFDGRGNYSMGVREQIIFPEIDYDKVDRVRGLDITITTTAKTDEEGQALLAAFNFPFRK.

This sequence belongs to the universal ribosomal protein uL5 family. As to quaternary structure, part of the 50S ribosomal subunit; part of the 5S rRNA/L5/L18/L25 subcomplex. Contacts the 5S rRNA and the P site tRNA. Forms a bridge to the 30S subunit in the 70S ribosome.

This is one of the proteins that bind and probably mediate the attachment of the 5S RNA into the large ribosomal subunit, where it forms part of the central protuberance. In the 70S ribosome it contacts protein S13 of the 30S subunit (bridge B1b), connecting the 2 subunits; this bridge is implicated in subunit movement. Contacts the P site tRNA; the 5S rRNA and some of its associated proteins might help stabilize positioning of ribosome-bound tRNAs. The chain is Large ribosomal subunit protein uL5 from Glaesserella parasuis serovar 5 (strain SH0165) (Haemophilus parasuis).